The chain runs to 209 residues: Aspartate kinase-like protein lolA1 (209 aa).

Basic and acidic residues predominate over residues 1-11 (MLDESPMRKGD). Residues 1–27 (MLDESPMRKGDSVSNDQSNPESNASVS) are disordered. The span at 12–27 (SVSNDQSNPESNASVS) shows a compositional bias: polar residues.

This sequence belongs to the aspartokinase family.

Its pathway is alkaloid biosynthesis. In terms of biological role, aspartokinase-like protein; part of the gene cluster that mediates the biosynthesis of loline alkaloids, potent insecticidal agents composed of a pyrrolizidine ring system and an uncommon ether bridge linking carbons 2 and 7. Lolines are structurally differentiated by the various modifications of the L-amino group and include norloline, loline, N-methylloline, N-acetylloline, N-acetylnorloline, and N-formylloline. The first committed step is the condensation of O-acetyl-L-homoserine (derived from L-aspartic acid) and L-proline, probably catalyzed by the gamma-type pyridoxal 5'-phosphate(PLP)-dependent enzyme lolC, to give the diamino diacid, NACPP. Ensuing cyclization, decarboxylation, and acetylation steps yield 1-exo-acetamidopyrrolizidine (AcAP). LolO is required for installation of the ether bridge upon the pathway intermediate, 1-exo-acetamidopyrrolizidine (AcAP). In sequential 2-oxoglutarate- and O(2)-consuming steps, lolO removes hydrogens from C2 and C7 of AcAP to form both carbon-oxygen bonds in N-acetylnorloline (NANL), the precursor to all other lolines. The enzymes lolD, lolE, lolF and lolT have also been proposed to be involved in the ether-bridge installation. Further processing of the exocyclic moiety of NANL by fungal N-acetamidase (LolN), methyltransferase (LolM), and cytochrome P450 (LolP) enzymes, with occasional involvement of a plant acetyltransferase, generates the other known lolines. LolN transforms NANL to norlonine which is monomethylated and dimethylated to respectively lonine and N-methyllonine (NML) by lolM. LolP catalyzes hydroxylation of the methyl group in N-methylloline (NML) and further oxygenation to N-formylloline (NFL). A plant acetyltransferase is responsible for the acetylation of loline to form N-acetylloline (NAL). LolA might interact with aspartate kinase to prevent feedback inhibition of its activity by these end products and thereby promote production of L-homoserine from L-aspartate. The polypeptide is Aspartate kinase-like protein lolA1 (Epichloe uncinata (Endophyte fungus)).